The sequence spans 1379 residues: Increased rDNA silencing protein 4 homolog (1379 aa).

Disordered stretches follow at residues 1 to 25 (MDAI…RNLS), 138 to 159 (TSTR…HHPR), 240 to 314 (EFDF…PLPS), 337 to 370 (SQPF…QAIM), 534 to 573 (ASKR…ASQQ), 768 to 816 (TDLH…NDIG), 1047 to 1110 (DAPS…KDSQ), and 1168 to 1208 (AVHE…DGKY). Residues 250–259 (PSDKNLEKLK) show a composition bias toward basic and acidic residues. Positions 262 to 287 (ASKQASESQSLKNMESLSLARSSPIL) are enriched in polar residues. The span at 541–555 (SQQTESASKSSSNIS) shows a compositional bias: low complexity. Residues 562–573 (PPSNFSISASQQ) are compositionally biased toward polar residues. A compositionally biased stretch (basic residues) spans 770 to 780 (LHRKPRRKHKS). Acidic residues predominate over residues 793 to 802 (DESPQSDEVE). Positions 1240-1329 (AANKGYLLSK…DSVWLSSKRM (90 aa)) constitute an EH domain. Residues 1273–1308 (APTSVLAKIYDLVDRHHTGVLGRDEFIVGMFLIDQY) enclose the EF-hand domain.

Belongs to the IRS4 family.

Its function is as follows. Positive regulator of phosphatidylinositol 4,5-bisphosphate turnover and negatively regulates signaling through the cell integrity pathway. Involved in rDNA silencing. In Schizosaccharomyces pombe (strain 972 / ATCC 24843) (Fission yeast), this protein is Increased rDNA silencing protein 4 homolog.